We begin with the raw amino-acid sequence, 1118 residues long: MSSTRHSYSSGGSGKSKHGRRIAQTSADAKLYAAYEESSESGSFDYSQSVSAGKEGISSQLVTAYLQRMQRGGLVQQFGCLIAVEEETFRVLAYGANAPEMLDVATQAVPTMGQYSRLCIGADVRTLLSPASASALDRVIGVVDVSMFNPITVQSRSSGKPFYAILHRNDVGLVIDLEPIRPDDASITGGALQSHKLAAKAIARLQSLPGGDIGLLCDSVVEEVHELTGFDRVMAYKFHEDEHGEVVAEIRRTDLEPYIGLHYPATDIPQAARFLFMKNRVRMICDCRLPPVKLIQDKTLSQPMSLTGSKLRAPHGCHTQYMANMNSISSLVMAVIVNDSDDDSPGHSSQGIKLWGLVVCHHTSPRYVPFPVRSACEFLMQVFSLQLNMEVGMAAQVREKHILRTQTLLCDMLLRDAPIGIVSQSPNIMDLVTCDGAALYYGKKCWLLGTTPTEAQIVDIAAWLLDCHKDSTGLSTDSLAKTGYPEASCLGDAVCGLAAAKITATDFLFWFRSHTAKEVRWGGARHDPEERDDGRRMHPRSSFKAFLEVVKQQSLPWEDVEMDAIHSLQLILRGSFQDIDDSNTKTMIHARLNDLKLQGLDELSTVASEMVRLIETATAPILAVDGQGLINGWNGKVAELTGLSFETAMGKSLAKELVHEESKTIVERVLHLALEGEEEQDIEIHLRTYDQHKQKGVVILIVNTCCSRDVSNNVVGVCFVGQDVTGQKLVLDRFIRIQGDYKAIVQSLNPLIPPIFGADEYGFCSEWNAAMEKLSNWRREEVLGKMLVGEIFGLQMVCCRLQGQDVVTKLMIVLNDAVNGQESEKFPLVFYDRNGRRVEALLIASKRTDADGRITGVFCFLHTASPELLQALIIKRAKEKVDKELSYVKEELKKPLEGLAFTRTVLEGTNLTIEQRQLIKTNAWCERQLRKILEDDLNNIEEGYMDLEMSEFFMGSVIDAVISQGMAASRGKGVQILTEIPNDVKLMCLFGDQARLQQVLADLLFCAINHATTTNEDEKDWVTIKVSRTKTRLDDGVHLMHFEFRISHSGQGISEALVEEMTNKSQKWTPEGLAISISCTLIRLMNGDVKYTTDAGNKCFLVTIQFPLAHRDDATSVR.

Low complexity predominate over residues 1–10 (MSSTRHSYSS). A disordered region spans residues 1-23 (MSSTRHSYSSGGSGKSKHGRRIA). A GAF domain is found at 212–391 (DIGLLCDSVV…VFSLQLNMEV (180 aa)). C317 contacts phytochromobilin. PAS domains lie at 606–677 (VASE…LEGE) and 740–811 (DYKA…TKLM). A Histidine kinase domain is found at 887–1110 (YVKEELKKPL…LVTIQFPLAH (224 aa)).

It belongs to the phytochrome family. Homodimer. Post-translationally, contains one covalently linked phytochromobilin chromophore.

Functionally, regulatory photoreceptor which exists in two forms that are reversibly interconvertible by light: the Pr form that absorbs maximally in the red region of the spectrum and the Pfr form that absorbs maximally in the far-red region. Photoconversion of Pr to Pfr induces an array of morphogenic responses, whereas reconversion of Pfr to Pr cancels the induction of those responses. Pfr controls the expression of a number of nuclear genes including those encoding the small subunit of ribulose-bisphosphate carboxylase, chlorophyll A/B binding protein, protochlorophyllide reductase, rRNA, etc. It also controls the expression of its own gene(s) in a negative feedback fashion. This chain is Phytochrome 1 (PHY1), found in Adiantum capillus-veneris (Maidenhair fern).